The primary structure comprises 618 residues: Dihydroxy-acid dehydratase 1 (618 aa).

Mg(2+) is bound at residue aspartate 81. Cysteine 122 serves as a coordination point for [2Fe-2S] cluster. Mg(2+)-binding residues include aspartate 123 and lysine 124. Lysine 124 carries the post-translational modification N6-carboxylysine. Cysteine 195 is a binding site for [2Fe-2S] cluster. Mg(2+) is bound at residue glutamate 491. The active-site Proton acceptor is serine 517.

Belongs to the IlvD/Edd family. Homodimer. [2Fe-2S] cluster is required as a cofactor. Requires Mg(2+) as cofactor.

The enzyme catalyses (2R)-2,3-dihydroxy-3-methylbutanoate = 3-methyl-2-oxobutanoate + H2O. It catalyses the reaction (2R,3R)-2,3-dihydroxy-3-methylpentanoate = (S)-3-methyl-2-oxopentanoate + H2O. The protein operates within amino-acid biosynthesis; L-isoleucine biosynthesis; L-isoleucine from 2-oxobutanoate: step 3/4. It functions in the pathway amino-acid biosynthesis; L-valine biosynthesis; L-valine from pyruvate: step 3/4. In terms of biological role, functions in the biosynthesis of branched-chain amino acids. Catalyzes the dehydration of (2R,3R)-2,3-dihydroxy-3-methylpentanoate (2,3-dihydroxy-3-methylvalerate) into 2-oxo-3-methylpentanoate (2-oxo-3-methylvalerate) and of (2R)-2,3-dihydroxy-3-methylbutanoate (2,3-dihydroxyisovalerate) into 2-oxo-3-methylbutanoate (2-oxoisovalerate), the penultimate precursor to L-isoleucine and L-valine, respectively. The chain is Dihydroxy-acid dehydratase 1 from Pseudoalteromonas translucida (strain TAC 125).